The sequence spans 199 residues: Putative DNA-directed RNA polymerase subunit L376 (199 aa).

The protein belongs to the eukaryotic RPB7/RPC8 RNA polymerase subunit family.

It is found in the virion. The enzyme catalyses RNA(n) + a ribonucleoside 5'-triphosphate = RNA(n+1) + diphosphate. The sequence is that of Putative DNA-directed RNA polymerase subunit L376 from Acanthamoeba polyphaga (Amoeba).